Consider the following 506-residue polypeptide: RNA-splicing ligase RtcB homolog (506 aa).

Positions 120, 123, 228, 260, and 354 each coordinate Mn(2+). 227 to 231 (NHYAE) is a binding site for GMP. Residues 354 to 355 (HN), 403 to 406 (GGTM), Ser410, 429 to 432 (HGAG), and Lys505 contribute to the GMP site. His429 (GMP-histidine intermediate) is an active-site residue.

This sequence belongs to the RtcB family. As to quaternary structure, catalytic component of the tRNA-splicing ligase complex. The cofactor is Mn(2+).

The enzyme catalyses a 3'-end 3'-phospho-ribonucleotide-RNA + a 5'-end dephospho-ribonucleoside-RNA + GTP = a ribonucleotidyl-ribonucleotide-RNA + GMP + diphosphate. The catalysed reaction is a 3'-end 2',3'-cyclophospho-ribonucleotide-RNA + a 5'-end dephospho-ribonucleoside-RNA + GTP + H2O = a ribonucleotidyl-ribonucleotide-RNA + GMP + diphosphate + H(+). Catalytic subunit of the tRNA-splicing ligase complex that acts by directly joining spliced tRNA halves to mature-sized tRNAs by incorporating the precursor-derived splice junction phosphate into the mature tRNA as a canonical 3',5'-phosphodiester. May act as an RNA ligase with broad substrate specificity, and may function toward other RNAs. The protein is RNA-splicing ligase RtcB homolog of Plasmodium falciparum (isolate 3D7).